A 1311-amino-acid polypeptide reads, in one-letter code: Cyclin-G-associated kinase (1311 aa).

An N-acetylserine modification is found at Ser2. 2 positions are modified to phosphoserine: Ser2 and Ser16. Positions 40–314 (LRVRRVLAEG…SIAEVVHQLQ (275 aa)) constitute a Protein kinase domain. Asp173 acts as the Proton acceptor in catalysis. The 168-residue stretch at 399 to 566 (SVANYAKGDL…EYMCDMVAEE (168 aa)) folds into the Phosphatase tensin-type domain. Residue Ser456 is modified to Phosphoserine. A C2 tensin-type domain is found at 572–710 (SKPILVRAVV…FQVNLEVEVE (139 aa)). Disordered stretches follow at residues 709–729 (VEPR…SMRG) and 749–788 (FGKP…SADA). Phosphoserine is present on Ser770. Residues 770–788 (SPEAEPTDSDSPPSSSADA) show a composition bias toward low complexity. Thr776 carries the post-translational modification Phosphothreonine. A Phosphoserine modification is found at Ser783. A Phosphothreonine modification is found at Thr794. Disordered stretches follow at residues 801–860 (KEAE…VQQD), 913–1035 (CLLG…DLLG), and 1047–1150 (AVAP…PNYA). Residues Ser811, Ser826, Ser829, Ser834, and Ser939 each carry the phosphoserine modification. Low complexity-rich tracts occupy residues 925-939 (PPED…LLAS) and 950-966 (PRGG…PLLP). 2 stretches are compositionally biased toward polar residues: residues 967 to 976 (SSGNNSQPCS) and 1070 to 1080 (SQASWTKSQNP). Ser1096 carries the post-translational modification Phosphoserine. Residues 1109–1124 (TATTPKGSSSWQTSRP) show a composition bias toward polar residues. The residue at position 1123 (Arg1123) is an Omega-N-methylarginine. Ser1176 and Ser1185 each carry phosphoserine. One can recognise a J domain in the interval 1247–1311 (SRWTPVGMAD…FENQGSRPLF (65 aa)).

It belongs to the protein kinase superfamily. Ser/Thr protein kinase family. As to expression, ubiquitous. Highest in testis.

It is found in the cytoplasm. The protein localises to the perinuclear region. The protein resides in the golgi apparatus. Its subcellular location is the trans-Golgi network. It localises to the cell junction. It is found in the focal adhesion. The protein localises to the cytoplasmic vesicle. The protein resides in the clathrin-coated vesicle. It catalyses the reaction L-seryl-[protein] + ATP = O-phospho-L-seryl-[protein] + ADP + H(+). The enzyme catalyses L-threonyl-[protein] + ATP = O-phospho-L-threonyl-[protein] + ADP + H(+). Associates with cyclin G and CDK5. Seems to act as an auxilin homolog that is involved in the uncoating of clathrin-coated vesicles by Hsc70 in non-neuronal cells. Expression oscillates slightly during the cell cycle, peaking at G1. May play a role in clathrin-mediated endocytosis and intracellular trafficking, and in the dynamics of clathrin assembly/disassembly. The chain is Cyclin-G-associated kinase from Homo sapiens (Human).